Here is a 203-residue protein sequence, read N- to C-terminus: Glycerol-3-phosphate acyltransferase (203 aa).

The next 6 helical transmembrane spans lie at 5–25 (IASIALVLLAYLSGSIPFSLL), 50–70 (TCGFSAFALAMGGDMLKGALP), 72–92 (IAAQALGLSPLAVVIVGTAAM), 115–135 (VVLTLAPLVALPGLAAWAVTF), 140–160 (ISAVASLTAAAVCGIAAAVLL), and 162–182 (LGMLPPAYAIFVWGAVAAIVF).

This sequence belongs to the PlsY family. In terms of assembly, probably interacts with PlsX.

It is found in the cell membrane. The catalysed reaction is an acyl phosphate + sn-glycerol 3-phosphate = a 1-acyl-sn-glycero-3-phosphate + phosphate. It participates in lipid metabolism; phospholipid metabolism. In terms of biological role, catalyzes the transfer of an acyl group from acyl-phosphate (acyl-PO(4)) to glycerol-3-phosphate (G3P) to form lysophosphatidic acid (LPA). This enzyme utilizes acyl-phosphate as fatty acyl donor, but not acyl-CoA or acyl-ACP. The sequence is that of Glycerol-3-phosphate acyltransferase from Roseiflexus sp. (strain RS-1).